Consider the following 436-residue polypeptide: Eukaryotic translation initiation factor 5 (436 aa).

Gly27–Thr34 contributes to the GTP binding site. Residues Asn177–Ser203 are disordered. Residues Asn184–Pro195 show a composition bias toward acidic residues. A W2 domain is found at Glu216 to Glu379. The segment covering Leu396–Gln408 has biased composition (basic and acidic residues). Positions Leu396–Ile436 are disordered. The span at Gln409–Ala425 shows a compositional bias: low complexity. Residues Asn426 to Ile436 are compositionally biased toward acidic residues.

This sequence belongs to the eIF-2-beta/eIF-5 family.

Its function is as follows. Catalyzes the hydrolysis of GTP bound to the 40S ribosomal initiation complex (40S.mRNA.Met-tRNA[F].eIF-2.GTP) with the subsequent joining of a 60S ribosomal subunit resulting in the release of eIF-2 and the guanine nucleotide. The subsequent joining of a 60S ribosomal subunit results in the formation of a functional 80S initiation complex (80S.mRNA.Met-tRNA[F]). The protein is Eukaryotic translation initiation factor 5 of Caenorhabditis elegans.